The chain runs to 517 residues: 2,3-bisphosphoglycerate-independent phosphoglycerate mutase (517 aa).

Residues D14 and S64 each coordinate Mn(2+). S64 (phosphoserine intermediate) is an active-site residue. Residues H125, 155–156 (RD), R187, R193, 259–262 (RPDR), and K334 each bind substrate. Mn(2+) contacts are provided by D401, H405, D442, H443, and H461.

The protein belongs to the BPG-independent phosphoglycerate mutase family. As to quaternary structure, monomer. Requires Mn(2+) as cofactor.

The catalysed reaction is (2R)-2-phosphoglycerate = (2R)-3-phosphoglycerate. It participates in carbohydrate degradation; glycolysis; pyruvate from D-glyceraldehyde 3-phosphate: step 3/5. Catalyzes the interconversion of 2-phosphoglycerate and 3-phosphoglycerate. The chain is 2,3-bisphosphoglycerate-independent phosphoglycerate mutase from Symbiobacterium thermophilum (strain DSM 24528 / JCM 14929 / IAM 14863 / T).